A 338-amino-acid chain; its full sequence is Anthranilate phosphoribosyltransferase (338 aa).

5-phospho-alpha-D-ribose 1-diphosphate-binding positions include glycine 81, 84-85 (GD), serine 89, 91-94 (NVST), 109-117 (KHGNRALSS), and alanine 121. Residue glycine 81 participates in anthranilate binding. Residue serine 93 coordinates Mg(2+). Asparagine 112 serves as a coordination point for anthranilate. Arginine 167 contributes to the anthranilate binding site. Mg(2+)-binding residues include aspartate 226 and glutamate 227.

Belongs to the anthranilate phosphoribosyltransferase family. Homodimer. Mg(2+) serves as cofactor.

The catalysed reaction is N-(5-phospho-beta-D-ribosyl)anthranilate + diphosphate = 5-phospho-alpha-D-ribose 1-diphosphate + anthranilate. Its pathway is amino-acid biosynthesis; L-tryptophan biosynthesis; L-tryptophan from chorismate: step 2/5. Functionally, catalyzes the transfer of the phosphoribosyl group of 5-phosphorylribose-1-pyrophosphate (PRPP) to anthranilate to yield N-(5'-phosphoribosyl)-anthranilate (PRA). The chain is Anthranilate phosphoribosyltransferase from Rhodopseudomonas palustris (strain HaA2).